The primary structure comprises 260 residues: Putative ABC transporter ATP-binding protein PH0132 (260 aa).

The ABC transporter domain maps to 2–234 (IEFRDVWFWY…DLEGFGLKEP (233 aa)). Position 34–41 (34–41 (GPNGSGKT)) interacts with ATP.

It belongs to the ABC transporter superfamily.

The protein resides in the cell membrane. Probably part of an ABC transporter complex. Responsible for energy coupling to the transport system. This Pyrococcus horikoshii (strain ATCC 700860 / DSM 12428 / JCM 9974 / NBRC 100139 / OT-3) protein is Putative ABC transporter ATP-binding protein PH0132.